We begin with the raw amino-acid sequence, 466 residues long: Fumarate hydratase class II (466 aa).

Substrate-binding positions include 100-102 (SGT), arginine 128, 131-134 (HPND), 141-143 (SSN), and threonine 189. The segment covering 122 to 137 (GERGERRKVHPNDDVN) has biased composition (basic and acidic residues). The interval 122–143 (GERGERRKVHPNDDVNKGQSSN) is disordered. The active-site Proton donor/acceptor is histidine 190. Serine 320 is a catalytic residue. Residues serine 321 and 326-328 (KVN) contribute to the substrate site.

Belongs to the class-II fumarase/aspartase family. Fumarase subfamily. Homotetramer.

It localises to the cytoplasm. The enzyme catalyses (S)-malate = fumarate + H2O. It functions in the pathway carbohydrate metabolism; tricarboxylic acid cycle; (S)-malate from fumarate: step 1/1. In terms of biological role, involved in the TCA cycle. Catalyzes the stereospecific interconversion of fumarate to L-malate. The chain is Fumarate hydratase class II from Myxococcus xanthus (strain DK1622).